Consider the following 308-residue polypeptide: Putative T-box protein 30/42 (308 aa).

Positions 11-192 form a DNA-binding region, T-box; that stretch reads MSNEELWKER…KHSTFGNRSE (182 aa). A disordered region spans residues 186-220; sequence TFGNRSEGGIKRKTSDAAGQLPSKRSSKKPVKKDV.

Its subcellular location is the nucleus. Involved in the regulatory network to control embryonic patterning and morphogenesis. Implicated in negatively regulating vab-7 expression at the anterior of embryos. In Caenorhabditis elegans, this protein is Putative T-box protein 30/42 (tbx-30).